The sequence spans 838 residues: Protein P (838 aa).

Residues methionine 1–glutamine 179 are terminal protein domain (TP). A spacer region spans residues glutamate 180–arginine 341. Residues glycine 219–serine 245 are disordered. Residues glutamate 342–glutamine 685 are polymerase/reverse transcriptase domain (RT). One can recognise a Reverse transcriptase domain in the interval glutamate 352–isoleucine 595. Mg(2+)-binding residues include aspartate 424, aspartate 546, and aspartate 547.

This sequence belongs to the hepadnaviridae P protein family.

The catalysed reaction is DNA(n) + a 2'-deoxyribonucleoside 5'-triphosphate = DNA(n+1) + diphosphate. It carries out the reaction Endonucleolytic cleavage to 5'-phosphomonoester.. With respect to regulation, activated by host HSP70 and HSP40 in vitro to be able to bind the epsilon loop of the pgRNA. Because deletion of the RNase H region renders the protein partly chaperone-independent, the chaperones may be needed indirectly to relieve occlusion of the RNA-binding site by this domain. Inhibited by several reverse-transcriptase inhibitors: Lamivudine, Adefovir and Entecavir. Functionally, multifunctional enzyme that converts the viral RNA genome into dsDNA in viral cytoplasmic capsids. This enzyme displays a DNA polymerase activity that can copy either DNA or RNA templates, and a ribonuclease H (RNase H) activity that cleaves the RNA strand of RNA-DNA heteroduplexes in a partially processive 3'- to 5'-endonucleasic mode. Neo-synthesized pregenomic RNA (pgRNA) are encapsidated together with the P protein, and reverse-transcribed inside the nucleocapsid. Initiation of reverse-transcription occurs first by binding the epsilon loop on the pgRNA genome, and is initiated by protein priming, thereby the 5'-end of (-)DNA is covalently linked to P protein. Partial (+)DNA is synthesized from the (-)DNA template and generates the relaxed circular DNA (RC-DNA) genome. After budding and infection, the RC-DNA migrates in the nucleus, and is converted into a plasmid-like covalently closed circular DNA (cccDNA). The activity of P protein does not seem to be necessary for cccDNA generation, and is presumably released from (+)DNA by host nuclear DNA repair machinery. The chain is Protein P from Hepatitis B virus genotype A2 subtype adw (isolate Japan/Nishioka/1983) (HBV-A).